The chain runs to 491 residues: CTD small phosphatase-like protein 1 (491 aa).

Disordered stretches follow at residues 1 to 53, 140 to 198, 221 to 249, and 261 to 282; these read MTYA…SLDY, KLTK…TARR, KIQSSQRTNSTNNNHQNGRPSTPTNTGPP, and TVTGLPTTGQACQQNGSGDGVT. The segment covering 17 to 26 has biased composition (pro residues); it reads VPPPRTPVGP. The span at 37–49 shows a compositional bias: polar residues; sequence SASQPLQPKNGAN. Over residues 141 to 156 the composition is skewed to basic and acidic residues; that stretch reads LTKDEKNGGKMNRDGG. A compositionally biased stretch (polar residues) spans 176–187; sequence ASTPLNSFSANA. Positions 223-237 are enriched in low complexity; it reads QSSQRTNSTNNNHQN. 2 stretches are compositionally biased toward polar residues: residues 238 to 249 and 264 to 276; these read GRPSTPTNTGPP and GLPTTGQACQQNG. The region spanning 307–465 is the FCP1 homology domain; that stretch reads QDSNKKCLVI…LDILPSLEHL (159 aa). Catalysis depends on Asp317, which acts as the 4-aspartylphosphate intermediate. Positions 317, 319, and 428 each coordinate Mg(2+). Asp319 serves as the catalytic Proton donor.

In terms of assembly, may interact (via phosphatase domain) with cpna-1. Isoform a and isoform b may interact with lim-9 (via LIM zinc-binding domain). Isoform a and isoform b may interact (via FCP1 homology domain) with unc-89 (via fibronectin type-III domain 1, Ig-like C2-type domain 48/49 and protein kinase domain 1 or Ig-like C2-type domain 50, fibronectin type-III domain 2 and protein kinase domain 2); the interaction may act as a molecular bridge to bring two unc-89 molecules together or to stabilize a loop between the 2 protein kinase domains. Mg(2+) is required as a cofactor. Expressed in pharyngeal, vulval and body wall muscles.

Its subcellular location is the cytoplasm. It localises to the myofibril. The protein localises to the sarcomere. It is found in the m line. It carries out the reaction O-phospho-L-seryl-[protein] + H2O = L-seryl-[protein] + phosphate. The enzyme catalyses O-phospho-L-threonyl-[protein] + H2O = L-threonyl-[protein] + phosphate. Inhibited by beryllium trifluoride (BeF(3-)) and tetrafluoroaluminate (AlF(4-)) but not by sodium fluoride (NaF) or sodium orthovanadate (Na3VO4). Functionally, phosphatase which may play a role in the egg laying muscles. The chain is CTD small phosphatase-like protein 1 from Caenorhabditis elegans.